Reading from the N-terminus, the 371-residue chain is Queuine tRNA-ribosyltransferase (371 aa).

D89 (proton acceptor) is an active-site residue. Substrate-binding positions include 89–93 (DSGGF), D143, Q185, and G212. Residues 243-249 (GVGKPED) form an RNA binding region. The active-site Nucleophile is D262. The RNA binding; important for wobble base 34 recognition stretch occupies residues 267–271 (TRNAR). C300, C302, C305, and H331 together coordinate Zn(2+).

It belongs to the queuine tRNA-ribosyltransferase family. Homodimer. Within each dimer, one monomer is responsible for RNA recognition and catalysis, while the other monomer binds to the replacement base PreQ1. Requires Zn(2+) as cofactor.

It catalyses the reaction 7-aminomethyl-7-carbaguanine + guanosine(34) in tRNA = 7-aminomethyl-7-carbaguanosine(34) in tRNA + guanine. The protein operates within tRNA modification; tRNA-queuosine biosynthesis. Functionally, catalyzes the base-exchange of a guanine (G) residue with the queuine precursor 7-aminomethyl-7-deazaguanine (PreQ1) at position 34 (anticodon wobble position) in tRNAs with GU(N) anticodons (tRNA-Asp, -Asn, -His and -Tyr). Catalysis occurs through a double-displacement mechanism. The nucleophile active site attacks the C1' of nucleotide 34 to detach the guanine base from the RNA, forming a covalent enzyme-RNA intermediate. The proton acceptor active site deprotonates the incoming PreQ1, allowing a nucleophilic attack on the C1' of the ribose to form the product. After dissociation, two additional enzymatic reactions on the tRNA convert PreQ1 to queuine (Q), resulting in the hypermodified nucleoside queuosine (7-(((4,5-cis-dihydroxy-2-cyclopenten-1-yl)amino)methyl)-7-deazaguanosine). The chain is Queuine tRNA-ribosyltransferase from Pseudomonas putida (strain ATCC 47054 / DSM 6125 / CFBP 8728 / NCIMB 11950 / KT2440).